Consider the following 490-residue polypeptide: Ribosomal L1 domain-containing protein 1 (490 aa).

The residue at position 1 (methionine 1) is an N-acetylmethionine. Residues 1–27 (MEDSASASLSSAAATGTSTSTPAAPTA) show a composition bias toward low complexity. The disordered stretch occupies residues 1–33 (MEDSASASLSSAAATGTSTSTPAAPTARKQLDK). Residues lysine 120 and lysine 254 each participate in a glycyl lysine isopeptide (Lys-Gly) (interchain with G-Cter in SUMO2) cross-link. Residues 280–293 (LNKKKKEARRKRRE) show a composition bias toward basic residues. The stretch at 280-313 (LNKKKKEARRKRRERNFEKQKERKKKRQQARKTA) forms a coiled coil. A disordered region spans residues 280–490 (LNKKKKEARR…PKKPKVPQST (211 aa)). Basic and acidic residues predominate over residues 329–343 (TVKKPESKKEQTPEH). Threonine 340 bears the Phosphothreonine mark. Over residues 344 to 353 (GKKKRGRGKA) the composition is skewed to basic residues. Phosphothreonine is present on threonine 358. Serine 361 bears the Phosphoserine mark. Position 375 is a phosphothreonine (threonine 375). A compositionally biased stretch (basic and acidic residues) spans 376–385 (PANEKVEIQK). Residue lysine 380 forms a Glycyl lysine isopeptide (Lys-Gly) (interchain with G-Cter in SUMO2) linkage. A phosphoserine mark is found at serine 392 and serine 396. A phosphothreonine mark is found at threonine 415 and threonine 423. Serine 427 carries the phosphoserine modification. The span at 427–460 (SPEKKPKIKEEAVKEKSPSLGKKDARQTPKKPEA) shows a compositional bias: basic and acidic residues. Residue lysine 435 forms a Glycyl lysine isopeptide (Lys-Gly) (interchain with G-Cter in SUMO2) linkage. Residue serine 443 is modified to Phosphoserine. Lysine 461 participates in a covalent cross-link: Glycyl lysine isopeptide (Lys-Gly) (interchain with G-Cter in SUMO2). Residue threonine 465 is modified to Phosphothreonine. N6-acetyllysine is present on lysine 468. Serine 469 is subject to Phosphoserine. Positions 469–490 (SVRKASHTPKKWPKKPKVPQST) are enriched in basic residues.

It belongs to the universal ribosomal protein uL1 family. Highly divergent. As to quaternary structure, interacts with ING1 (isoform 2). Interacts with KPNA7 and KPNA2. Expressed at high intensities in the heart, skeletal muscle, and placenta.

Its subcellular location is the nucleus. The protein resides in the nucleolus. Its function is as follows. Regulates cellular senescence through inhibition of PTEN translation. Acts as a pro-apoptotic regulator in response to DNA damage. The protein is Ribosomal L1 domain-containing protein 1 (RSL1D1) of Homo sapiens (Human).